The following is a 1450-amino-acid chain: DNA-directed RNA polymerase RPB1 homolog (1450 aa).

Belongs to the RNA polymerase beta' chain family. Part of the viral DNA-directed RNA polymerase that consists of 8 polII-like subunits (RPB1, RPB2, RPB3, RPB5, RPB6, RPB7, RPB9, RPB10), a capping enzyme and a termination factor.

Its subcellular location is the virion. It carries out the reaction RNA(n) + a ribonucleoside 5'-triphosphate = RNA(n+1) + diphosphate. Its function is as follows. Catalytic component of the DNA-directed RNA polymerase (RNAP) that catalyzes the transcription in the cytoplasm of viral DNA into RNA using the four ribonucleoside triphosphates as substrates. Forms the polymerase active center together with RPB2. Part of the core element with the central large cleft, the clamp element that moves to open and close the cleft and the jaws that are thought to grab the incoming DNA template. The polypeptide is DNA-directed RNA polymerase RPB1 homolog (Ornithodoros (relapsing fever ticks)).